The following is a 206-amino-acid chain: Large ribosomal subunit protein uL4 (206 aa).

A disordered region spans residues 65 to 85; the sequence is KQKGSGGARHGDRKAPQFRGG.

It belongs to the universal ribosomal protein uL4 family. Part of the 50S ribosomal subunit.

Its function is as follows. One of the primary rRNA binding proteins, this protein initially binds near the 5'-end of the 23S rRNA. It is important during the early stages of 50S assembly. It makes multiple contacts with different domains of the 23S rRNA in the assembled 50S subunit and ribosome. Forms part of the polypeptide exit tunnel. In Parvibaculum lavamentivorans (strain DS-1 / DSM 13023 / NCIMB 13966), this protein is Large ribosomal subunit protein uL4.